The chain runs to 61 residues: Large ribosomal subunit protein uL30 (61 aa).

This sequence belongs to the universal ribosomal protein uL30 family. In terms of assembly, part of the 50S ribosomal subunit.

This chain is Large ribosomal subunit protein uL30, found in Caulobacter vibrioides (strain ATCC 19089 / CIP 103742 / CB 15) (Caulobacter crescentus).